Reading from the N-terminus, the 215-residue chain is Octanoyltransferase (215 aa).

In terms of domain architecture, BPL/LPL catalytic spans 31-206; that stretch reads TSAEDEIWLV…QLVKHLDYAE (176 aa). Residues 70 to 77, 137 to 139, and 150 to 152 contribute to the substrate site; these read RGGQVTYH, SLG, and GLA. The Acyl-thioester intermediate role is filled by C168.

This sequence belongs to the LipB family.

It is found in the cytoplasm. It catalyses the reaction octanoyl-[ACP] + L-lysyl-[protein] = N(6)-octanoyl-L-lysyl-[protein] + holo-[ACP] + H(+). It functions in the pathway protein modification; protein lipoylation via endogenous pathway; protein N(6)-(lipoyl)lysine from octanoyl-[acyl-carrier-protein]: step 1/2. Functionally, catalyzes the transfer of endogenously produced octanoic acid from octanoyl-acyl-carrier-protein onto the lipoyl domains of lipoate-dependent enzymes. Lipoyl-ACP can also act as a substrate although octanoyl-ACP is likely to be the physiological substrate. In Pseudomonas fluorescens (strain SBW25), this protein is Octanoyltransferase.